The primary structure comprises 152 residues: Transcriptional regulator MraZ (152 aa).

SpoVT-AbrB domains follow at residues 5–52 (ASAI…PLQE) and 81–124 (AHEC…DEAA).

It belongs to the MraZ family. In terms of assembly, forms oligomers.

Its subcellular location is the cytoplasm. The protein resides in the nucleoid. This is Transcriptional regulator MraZ from Shewanella denitrificans (strain OS217 / ATCC BAA-1090 / DSM 15013).